Reading from the N-terminus, the 213-residue chain is Large ribosomal subunit protein uL3 (213 aa).

Residues 124 to 151 (KRHGQSRGPMAHGSRYHRRPGSMGSIAP) are disordered.

This sequence belongs to the universal ribosomal protein uL3 family. In terms of assembly, part of the 50S ribosomal subunit. Forms a cluster with proteins L14 and L19.

Functionally, one of the primary rRNA binding proteins, it binds directly near the 3'-end of the 23S rRNA, where it nucleates assembly of the 50S subunit. The sequence is that of Large ribosomal subunit protein uL3 from Geobacillus kaustophilus (strain HTA426).